Reading from the N-terminus, the 102-residue chain is MPNIKSAIKRVDVAERNRQRNIAYKSMIKTFTKKFMTRLGEYAQSPSEAVLTEVQALLNQTFSRIDKAIKAGVIHTNTGARKKSRLDAALRTALAKAQAKAG.

The protein belongs to the bacterial ribosomal protein bS20 family.

Its function is as follows. Binds directly to 16S ribosomal RNA. The polypeptide is Small ribosomal subunit protein bS20 (Gloeobacter violaceus (strain ATCC 29082 / PCC 7421)).